The sequence spans 397 residues: Dual-specificity RNA methyltransferase RlmN (397 aa).

Residue E130 is the Proton acceptor of the active site. One can recognise a Radical SAM core domain in the interval 138-377 (VEDRGAVCIS…ASPIRTPRGR (240 aa)). C145 and C383 form a disulfide bridge. [4Fe-4S] cluster-binding residues include C152, C156, and C159. S-adenosyl-L-methionine is bound by residues 209-210 (GE), S241, 263-265 (SLH), and N340. Catalysis depends on C383, which acts as the S-methylcysteine intermediate.

The protein belongs to the radical SAM superfamily. RlmN family. Requires [4Fe-4S] cluster as cofactor.

It localises to the cytoplasm. The catalysed reaction is adenosine(2503) in 23S rRNA + 2 reduced [2Fe-2S]-[ferredoxin] + 2 S-adenosyl-L-methionine = 2-methyladenosine(2503) in 23S rRNA + 5'-deoxyadenosine + L-methionine + 2 oxidized [2Fe-2S]-[ferredoxin] + S-adenosyl-L-homocysteine. It catalyses the reaction adenosine(37) in tRNA + 2 reduced [2Fe-2S]-[ferredoxin] + 2 S-adenosyl-L-methionine = 2-methyladenosine(37) in tRNA + 5'-deoxyadenosine + L-methionine + 2 oxidized [2Fe-2S]-[ferredoxin] + S-adenosyl-L-homocysteine. Its function is as follows. Specifically methylates position 2 of adenine 2503 in 23S rRNA and position 2 of adenine 37 in tRNAs. m2A2503 modification seems to play a crucial role in the proofreading step occurring at the peptidyl transferase center and thus would serve to optimize ribosomal fidelity. This is Dual-specificity RNA methyltransferase RlmN from Granulibacter bethesdensis (strain ATCC BAA-1260 / CGDNIH1).